The primary structure comprises 116 residues: Putative pterin-4-alpha-carbinolamine dehydratase 1 (116 aa).

The protein belongs to the pterin-4-alpha-carbinolamine dehydratase family.

The catalysed reaction is (4aS,6R)-4a-hydroxy-L-erythro-5,6,7,8-tetrahydrobiopterin = (6R)-L-erythro-6,7-dihydrobiopterin + H2O. This chain is Putative pterin-4-alpha-carbinolamine dehydratase 1, found in Gloeobacter violaceus (strain ATCC 29082 / PCC 7421).